The chain runs to 420 residues: Methylaspartate ammonia-lyase 1 (420 aa).

(2S,3S)-3-methyl-L-aspartate is bound at residue Gln173. Mg(2+)-binding residues include Asp237, Glu272, and Asp306. Gln328 is a binding site for (2S,3S)-3-methyl-L-aspartate. Catalysis depends on Lys330, which acts as the Proton acceptor. 359–360 lines the (2S,3S)-3-methyl-L-aspartate pocket; that stretch reads SC.

As to quaternary structure, homodimer. It depends on Mg(2+) as a cofactor.

The catalysed reaction is (2S,3S)-3-methyl-L-aspartate = mesaconate + NH4(+). The protein operates within amino-acid degradation; L-glutamate degradation via mesaconate pathway; acetate and pyruvate from L-glutamate: step 2/4. In terms of biological role, involved in the methylaspartate cycle. Catalyzes the formation of the alpha,beta-unsaturated bond by the reversible anti elimination of ammonia from L-threo-beta-methylaspartate (L-threo-(2S,3S)-3-methylaspartate) to give mesaconate. It can also catalyze the amination of fumarate and ethylfumarate, and the deamination of hydroxylamine, hydrazine, methylamine and ethylamine. This Carboxydothermus hydrogenoformans (strain ATCC BAA-161 / DSM 6008 / Z-2901) protein is Methylaspartate ammonia-lyase 1.